We begin with the raw amino-acid sequence, 289 residues long: Pyridoxal kinase PdxY (289 aa).

Substrate contacts are provided by residues Ser-9 and 44–45 (TQ). The ATP site is built by Asp-112, Val-144, Glu-149, and Lys-182. Asp-221 contacts substrate.

It belongs to the pyridoxine kinase family. PdxY subfamily. Homodimer. Requires Mg(2+) as cofactor.

It catalyses the reaction pyridoxal + ATP = pyridoxal 5'-phosphate + ADP + H(+). It participates in cofactor metabolism; pyridoxal 5'-phosphate salvage; pyridoxal 5'-phosphate from pyridoxal: step 1/1. In terms of biological role, pyridoxal kinase involved in the salvage pathway of pyridoxal 5'-phosphate (PLP). Catalyzes the phosphorylation of pyridoxal to PLP. The polypeptide is Pyridoxal kinase PdxY (Vibrio parahaemolyticus serotype O3:K6 (strain RIMD 2210633)).